The primary structure comprises 209 residues: A-type ATP synthase subunit D (209 aa).

Belongs to the V-ATPase D subunit family. Has multiple subunits, A(3), B(3), C, D, E, F, G, I and K(x); there may be a few other subunits as well.

Its subcellular location is the cell membrane. Component of the A-type ATP synthase that produces ATP from ADP in the presence of a proton gradient across the membrane. The sequence is that of A-type ATP synthase subunit D from Methanosarcina mazei (strain ATCC BAA-159 / DSM 3647 / Goe1 / Go1 / JCM 11833 / OCM 88) (Methanosarcina frisia).